We begin with the raw amino-acid sequence, 389 residues long: Transmembrane protease serine 11A (389 aa).

Topologically, residues 1–23 (MEVAGYGTHNRDLKQWMVTLLSA) are cytoplasmic. A helical; Signal-anchor for type II membrane protein transmembrane segment spans residues 24-44 (LSLMMVVVTIGLLALFLVFDI). Residues 31-148 (VTIGLLALFL…SLVQVKDCGK (118 aa)) form the SEA domain. The Extracellular portion of the chain corresponds to 45 to 389 (QVNSNSGQKS…RHWIASKTGL (345 aa)). One can recognise a Peptidase S1 domain in the interval 158 to 388 (IVSGNPAAKG…YRHWIASKTG (231 aa)). Cysteine 183 and cysteine 199 are disulfide-bonded. Residues histidine 198 and aspartate 243 each act as charge relay system in the active site. Asparagine 274 carries an N-linked (GlcNAc...) asparagine glycan. 2 cysteine pairs are disulfide-bonded: cysteine 308–cysteine 324 and cysteine 335–cysteine 364. The Charge relay system role is filled by serine 339.

It belongs to the peptidase S1 family.

Its subcellular location is the membrane. In terms of biological role, probable serine protease which may play a role in cellular senescence. Overexpression inhibits cell growth and induce G1 cell cycle arrest. This chain is Transmembrane protease serine 11A (Tmprss11a), found in Mus musculus (Mouse).